The sequence spans 377 residues: Succinyl-diaminopimelate desuccinylase (377 aa).

Histidine 68 lines the Zn(2+) pocket. The active site involves aspartate 70. Zn(2+) is bound at residue aspartate 101. Glutamate 135 acts as the Proton acceptor in catalysis. Zn(2+) is bound by residues glutamate 136, glutamate 164, and histidine 350.

This sequence belongs to the peptidase M20A family. DapE subfamily. As to quaternary structure, homodimer. Zn(2+) is required as a cofactor. It depends on Co(2+) as a cofactor.

It catalyses the reaction N-succinyl-(2S,6S)-2,6-diaminopimelate + H2O = (2S,6S)-2,6-diaminopimelate + succinate. It participates in amino-acid biosynthesis; L-lysine biosynthesis via DAP pathway; LL-2,6-diaminopimelate from (S)-tetrahydrodipicolinate (succinylase route): step 3/3. Catalyzes the hydrolysis of N-succinyl-L,L-diaminopimelic acid (SDAP), forming succinate and LL-2,6-diaminopimelate (DAP), an intermediate involved in the bacterial biosynthesis of lysine and meso-diaminopimelic acid, an essential component of bacterial cell walls. The protein is Succinyl-diaminopimelate desuccinylase of Acinetobacter baylyi (strain ATCC 33305 / BD413 / ADP1).